A 120-amino-acid chain; its full sequence is Protein Wnt-9 (120 aa).

Serine 1 carries the O-palmitoleoyl serine; by PORCN lipid modification. A disulfide bridge links cysteine 90 with cysteine 101.

It belongs to the Wnt family. Post-translationally, palmitoleoylation is required for efficient binding to frizzled receptors. Depalmitoleoylation leads to Wnt signaling pathway inhibition.

It is found in the secreted. It localises to the extracellular space. The protein resides in the extracellular matrix. Functionally, ligand for members of the frizzled family of seven transmembrane receptors. Probable developmental protein. May be a signaling molecule which affects the development of discrete regions of tissues. Is likely to signal over only few cell diameters. The polypeptide is Protein Wnt-9 (WNT-9) (Alopias vulpinus (Common thresher shark)).